Reading from the N-terminus, the 159-residue chain is Protein Smg homolog (159 aa).

Belongs to the Smg family.

The chain is Protein Smg homolog from Dichelobacter nodosus (strain VCS1703A).